Here is a 205-residue protein sequence, read N- to C-terminus: MIDIKELKFDEKGLIPAIVQDYYTKQVLMLAYMNEESLKLTLEKGETYFFSRSRGKIWHKGETSGNTQKVKKIFYDCDEDALLIQVEAKGPACHTGNISCFYRSFDEETEDGIEILNKLYERIKGRKINPVEGSYTNYLFEKGIDKILKKVGEEATEVVIASKNDSKDEIVYEVSDLIYHLMVLLVEKNITLNDIYNELERRYKK.

The segment at 1–115 is phosphoribosyl-AMP cyclohydrolase; it reads MIDIKELKFD…DEETEDGIEI (115 aa). The segment at 116–205 is phosphoribosyl-ATP pyrophosphohydrolase; it reads LNKLYERIKG…YNELERRYKK (90 aa).

This sequence in the N-terminal section; belongs to the PRA-CH family. It in the C-terminal section; belongs to the PRA-PH family.

Its subcellular location is the cytoplasm. It carries out the reaction 1-(5-phospho-beta-D-ribosyl)-ATP + H2O = 1-(5-phospho-beta-D-ribosyl)-5'-AMP + diphosphate + H(+). It catalyses the reaction 1-(5-phospho-beta-D-ribosyl)-5'-AMP + H2O = 1-(5-phospho-beta-D-ribosyl)-5-[(5-phospho-beta-D-ribosylamino)methylideneamino]imidazole-4-carboxamide. Its pathway is amino-acid biosynthesis; L-histidine biosynthesis; L-histidine from 5-phospho-alpha-D-ribose 1-diphosphate: step 2/9. It participates in amino-acid biosynthesis; L-histidine biosynthesis; L-histidine from 5-phospho-alpha-D-ribose 1-diphosphate: step 3/9. In Caldanaerobacter subterraneus subsp. tengcongensis (strain DSM 15242 / JCM 11007 / NBRC 100824 / MB4) (Thermoanaerobacter tengcongensis), this protein is Histidine biosynthesis bifunctional protein HisIE.